The primary structure comprises 157 residues: Transcriptional repressor NrdR (157 aa).

The segment at 3 to 34 (CPFCNAEDTKVIDSRLVEEGTQVRRRRECLKC) is a zinc-finger region. Residues 49–139 (PRIIKRDGRR…VYRSFQDINA (91 aa)) enclose the ATP-cone domain.

Belongs to the NrdR family. Requires Zn(2+) as cofactor.

Its function is as follows. Negatively regulates transcription of bacterial ribonucleotide reductase nrd genes and operons by binding to NrdR-boxes. This is Transcriptional repressor NrdR from Coxiella burnetii (strain CbuK_Q154) (Coxiella burnetii (strain Q154)).